Reading from the N-terminus, the 2841-residue chain is Neurofibromin (2841 aa).

Alanine 2 carries the post-translational modification N-acetylalanine. 2 positions are modified to phosphoserine: serine 866 and serine 878. The region spanning 1253–1484 (HLLYQLLWNM…DLARRFFLDI (232 aa)) is the Ras-GAP domain. One can recognise a CRAL-TRIO domain in the interval 1582–1740 (EKEEFKALKT…ATLALEEDLK (159 aa)). Residues 1582–1839 (EKEEFKALKT…RTRWELSQPD (258 aa)) form a lipid binding region. Serine 2190 and serine 2469 each carry phosphoserine. Position 2516 is a phosphothreonine (threonine 2516). 4 positions are modified to phosphoserine: serine 2517, serine 2523, serine 2525, and serine 2545. The Bipartite nuclear localization signal motif lies at 2557-2573 (KRQEMESGITTPPKMRR). Threonine 2567 carries the post-translational modification Phosphothreonine. 3 positions are modified to phosphoserine: serine 2599, serine 2804, and serine 2819. Positions 2786 to 2841 (SLATSQHSPGLDKENVELSPTAGHCNSGRTRHGSASQVQKQRSAGSFKRNSIKKIV) are disordered. Positions 2818–2829 (GSASQVQKQRSA) are enriched in polar residues.

Interacts with HTR6. Interacts with SPRED2. In terms of processing, ubiquitinated by RNF7/RBX2, leading to its degradation. In terms of tissue distribution, expressed predominantly in brain, spinal cord and testis. As to expression, expressed predominantly in adrenal gland, kidney, ovary and lung. Widely and more weakly expressed. Predominantly expressed in adrenal gland. In terms of tissue distribution, widely and more weakly expressed. Expressed mainly in testis.

It localises to the nucleus. It is found in the nucleolus. The protein resides in the cell membrane. Functionally, stimulates the GTPase activity of Ras. NF1 shows greater affinity for Ras GAP, but lower specific activity. May be a regulator of Ras activity. The sequence is that of Neurofibromin (Nf1) from Mus musculus (Mouse).